Here is a 531-residue protein sequence, read N- to C-terminus: Probable inactive beta-glucosidase 25 (531 aa).

Positions 1 to 24 (MALKAILFLGLFLVVIVSPITVYG) are cleaved as a signal peptide. Residues Gln53 and 202 to 203 (NE) contribute to the a beta-D-glucoside site. The active-site Proton donor is Glu203. The cysteines at positions 222 and 230 are disulfide-linked. Residues Phe348 and 477–478 (EW) each bind a beta-D-glucoside.

The protein belongs to the glycosyl hydrolase 1 family.

This is Probable inactive beta-glucosidase 25 from Arabidopsis thaliana (Mouse-ear cress).